We begin with the raw amino-acid sequence, 344 residues long: Hydrophobic dipeptide epimerase (344 aa).

Substrate is bound by residues Thr-126 and 151 to 153 (KIK). Residues Asp-184, Glu-210, and Asp-235 each contribute to the Mg(2+) site. Residues Lys-257 and 307–309 (DLD) contribute to the substrate site.

The protein belongs to the mandelate racemase/muconate lactonizing enzyme family. It depends on Mg(2+) as a cofactor.

In terms of biological role, dipeptide epimerase with a preference for hydrophobic substrates. Catalyzes the epimerization of L-Ala-L-Thr, L-Ala-L-Met, L-Ala-L-His, L-Ala-L-Phe, L-Ala-L-Tyr, L-Ala-L-Trp, L-Ile-L-Ala, L-Ile-L-Ser, L-Ile-L-Met, L-Ile-L-His, L-Ile-L-Phe, L-Ile-L-Tyr, L-Ile-L-Trp, L-Phe-L-Met, L-Phe-L-His, L-Phe-L-Phe, L-Phe-L-Tyr, L-Phe-L-Trp, L-Phe-L-Ser, L-Phe-L-Thr and L-Phe-L-Lys (in vitro). The sequence is that of Hydrophobic dipeptide epimerase from Roseobacter litoralis (strain ATCC 49566 / DSM 6996 / JCM 21268 / NBRC 15278 / OCh 149).